Reading from the N-terminus, the 476-residue chain is UDP-N-acetylmuramate--L-alanine ligase (476 aa).

125-131 contributes to the ATP binding site; the sequence is GTHGKTT.

This sequence belongs to the MurCDEF family.

It localises to the cytoplasm. It catalyses the reaction UDP-N-acetyl-alpha-D-muramate + L-alanine + ATP = UDP-N-acetyl-alpha-D-muramoyl-L-alanine + ADP + phosphate + H(+). Its pathway is cell wall biogenesis; peptidoglycan biosynthesis. Its function is as follows. Cell wall formation. The sequence is that of UDP-N-acetylmuramate--L-alanine ligase from Histophilus somni (strain 129Pt) (Haemophilus somnus).